The following is a 388-amino-acid chain: MLTMLTDRIDSQLVLSRLPRSRFQRFWETPTLIMKEESAPSSGSIILAEKSVNMRYCVRFASDSDFQTTFTLPQSTEEKYDKEQHPGEDEASSPLPSPLKVPYKWMPSSFIVKQCHTQLAFYNKHIIWLSRERKVPTSLGVSLYIPEGFFGITFYKCLDAQFVCMPELLESGLQVPQLDVVNLNDTFQSIFPGTIEGDIGVFPCFVPEPWQLMNLPPPNEHRFFSLRTRQTLVIGPGHTQTVYFDAAYVHAPGICALIVGVRQFSQSDLIIRPTIWLPGTAAGVTVVNTSHTTVCISPHTTVAKAVFTTHRFTYLPVGSHPLGQMIVPPTPDIGFTHTPEHALLQRTPSPVDDDVDETEEDEKSSDAESPVNTSDVIFDVGPKPPRHP.

The segment covering glutamate 77–glutamate 88 has biased composition (basic and acidic residues). 2 disordered regions span residues glutamate 77–proline 96 and threonine 336–proline 388. Residues valine 351 to lysine 363 show a composition bias toward acidic residues.

The protein belongs to the dUTPase family. Requires Mg(2+) as cofactor.

The catalysed reaction is dUTP + H2O = dUMP + diphosphate + H(+). Its pathway is pyrimidine metabolism; dUMP biosynthesis; dUMP from dCTP (dUTP route): step 2/2. Its function is as follows. Involved in nucleotide metabolism: produces dUMP, the immediate precursor of thymidine nucleotides and decreases the intracellular concentration of dUTP to avoid uracil incorporation into viral DNA. This is Deoxyuridine 5'-triphosphate nucleotidohydrolase from Homo sapiens (Human).